Here is a 337-residue protein sequence, read N- to C-terminus: tRNA N6-adenosine threonylcarbamoyltransferase (337 aa).

2 residues coordinate Fe cation: His-111 and His-115. Substrate contacts are provided by residues 134-138, Asp-167, Gly-180, and Asn-272; that span reads LVSGG. Fe cation is bound at residue Asp-300.

The protein belongs to the KAE1 / TsaD family. Fe(2+) serves as cofactor.

It localises to the cytoplasm. The enzyme catalyses L-threonylcarbamoyladenylate + adenosine(37) in tRNA = N(6)-L-threonylcarbamoyladenosine(37) in tRNA + AMP + H(+). In terms of biological role, required for the formation of a threonylcarbamoyl group on adenosine at position 37 (t(6)A37) in tRNAs that read codons beginning with adenine. Is involved in the transfer of the threonylcarbamoyl moiety of threonylcarbamoyl-AMP (TC-AMP) to the N6 group of A37, together with TsaE and TsaB. TsaD likely plays a direct catalytic role in this reaction. This Shewanella loihica (strain ATCC BAA-1088 / PV-4) protein is tRNA N6-adenosine threonylcarbamoyltransferase.